Consider the following 1157-residue polypeptide: DNA-directed RNA polymerase subunit beta (1157 aa).

Belongs to the RNA polymerase beta chain family. In terms of assembly, the RNAP catalytic core consists of 2 alpha, 1 beta, 1 beta' and 1 omega subunit. When a sigma factor is associated with the core the holoenzyme is formed, which can initiate transcription.

The catalysed reaction is RNA(n) + a ribonucleoside 5'-triphosphate = RNA(n+1) + diphosphate. Its function is as follows. DNA-dependent RNA polymerase catalyzes the transcription of DNA into RNA using the four ribonucleoside triphosphates as substrates. The chain is DNA-directed RNA polymerase subunit beta from Tropheryma whipplei (Whipple's bacillus).